We begin with the raw amino-acid sequence, 198 residues long: Recombination protein RecR (198 aa).

The C4-type zinc-finger motif lies at 57 to 72 (CSVCGHITDQDPCYIC). Residues 80-175 (SVICVVQDPK…KLSRIAHGLP (96 aa)) form the Toprim domain.

Belongs to the RecR family.

In terms of biological role, may play a role in DNA repair. It seems to be involved in an RecBC-independent recombinational process of DNA repair. It may act with RecF and RecO. The sequence is that of Recombination protein RecR from Bacillus pumilus (strain SAFR-032).